A 378-amino-acid chain; its full sequence is SWI/SNF-related matrix-associated actin-dependent regulator of chromatin subfamily B member 1 (378 aa).

The interval 1 to 106 is DNA-binding; that stretch reads MIMALSKTFG…DEKYKAVSIS (106 aa).

Belongs to the SNF5 family. Component of the multiprotein chromatin-remodeling complexes SWI/SNF. Component of neural progenitors-specific chromatin remodeling complex (npBAF complex) and the neuron-specific chromatin remodeling complex (nBAF complex). Component of the BAF (SWI/SNF) chromatin remodeling complex. Component of the SWI/SNF-B (PBAF) chromatin remodeling complex. Binds to double-stranded DNA.

The protein localises to the nucleus. Its function is as follows. Involved in chromatin-remodeling. Core component of the BAF (SWI/SNF) complex. This ATP-dependent chromatin-remodeling complex plays important roles in cell proliferation and differentiation, in cellular antiviral activities and inhibition of tumor formation. Belongs to the neural progenitors-specific chromatin remodeling complex (npBAF complex) and the neuron-specific chromatin remodeling complex (nBAF complex) and may play a role in neural development. This chain is SWI/SNF-related matrix-associated actin-dependent regulator of chromatin subfamily B member 1 (smarcb1), found in Xenopus tropicalis (Western clawed frog).